A 213-amino-acid chain; its full sequence is Adenylate kinase (213 aa).

Position 10–15 (10–15 (GCGKGT)) interacts with ATP. Residues 30-59 (STGDLMRKEISLNTRLGLKCQEYMNAGKYV) form an NMP region. AMP contacts are provided by residues T31, R36, 57 to 59 (KYV), 83 to 86 (GYPR), and Q90. Positions 124–161 (NRLVCPLCKASFNLETRKPKQEGLCDFDNTKLVKRSDD) are LID. R125 contributes to the ATP binding site. Zn(2+) is bound by residues C128 and C131. Position 134–135 (134–135 (SF)) interacts with ATP. The Zn(2+) site is built by C148 and D151. R158 and R169 together coordinate AMP. D197 is an ATP binding site.

This sequence belongs to the adenylate kinase family. As to quaternary structure, monomer.

The protein localises to the cytoplasm. The catalysed reaction is AMP + ATP = 2 ADP. It participates in purine metabolism; AMP biosynthesis via salvage pathway; AMP from ADP: step 1/1. Functionally, catalyzes the reversible transfer of the terminal phosphate group between ATP and AMP. Plays an important role in cellular energy homeostasis and in adenine nucleotide metabolism. In Mycoplasma mycoides subsp. mycoides SC (strain CCUG 32753 / NCTC 10114 / PG1), this protein is Adenylate kinase.